A 526-amino-acid polypeptide reads, in one-letter code: Peptide chain release factor 3 (526 aa).

The tr-type G domain occupies 9–277 (DKRRTFAIIS…GIVEWAPKPL (269 aa)). GTP contacts are provided by residues 18 to 25 (SHPDAGKT), 86 to 90 (DTPGH), and 140 to 143 (NKCD).

It belongs to the TRAFAC class translation factor GTPase superfamily. Classic translation factor GTPase family. PrfC subfamily.

The protein resides in the cytoplasm. Functionally, increases the formation of ribosomal termination complexes and stimulates activities of RF-1 and RF-2. It binds guanine nucleotides and has strong preference for UGA stop codons. It may interact directly with the ribosome. The stimulation of RF-1 and RF-2 is significantly reduced by GTP and GDP, but not by GMP. This chain is Peptide chain release factor 3, found in Shewanella frigidimarina (strain NCIMB 400).